A 526-amino-acid chain; its full sequence is Peptide chain release factor 3 (526 aa).

The tr-type G domain maps to 9–277 (DKRRTFAIIS…GIVEWAPKPL (269 aa)). Residues 18–25 (SHPDAGKT), 86–90 (DTPGH), and 140–143 (NKLD) each bind GTP.

This sequence belongs to the TRAFAC class translation factor GTPase superfamily. Classic translation factor GTPase family. PrfC subfamily.

It localises to the cytoplasm. In terms of biological role, increases the formation of ribosomal termination complexes and stimulates activities of RF-1 and RF-2. It binds guanine nucleotides and has strong preference for UGA stop codons. It may interact directly with the ribosome. The stimulation of RF-1 and RF-2 is significantly reduced by GTP and GDP, but not by GMP. The protein is Peptide chain release factor 3 of Shewanella baltica (strain OS155 / ATCC BAA-1091).